The primary structure comprises 411 residues: Zinc finger protein draculin (411 aa).

Residues 1–33 (MKNTTKPCRTEHHNAEGQRDRMEGNKKGETKAK) form a disordered region. The span at 8-32 (CRTEHHNAEGQRDRMEGNKKGETKA) shows a compositional bias: basic and acidic residues. C2H2-type zinc fingers lie at residues 36–58 (VACSHCKKRFSHKAHLQIHMRVH), 64–86 (YRCDQCGKCFPYKQSLKLHLDIH), 92–114 (YTCDECGESFKTRLQLRSHMTLH), 120–142 (YKCDQCEKSYGREDHLQRHMKLH), 148–170 (HKCEHCGKSFPMRDLLRSHLMVH), 176–198 (YTCDQCGKGFTLKKSYNEHMNIH), 204–226 (YTCDQCGKGFPYEQSLNLHMRFH), 232–254 (FTCDQCGQSFSQKGAYNIHMKIH), 260–282 (YTCDQCGMSFRHGYSLKLHMTHH), 288–310 (FHCDQCDKCYSTALFLKNHIKTH), 316–338 (YSCLTCGKTFNQLRGLRLHEKRH), 344–366 (FMCFDCGKCYFTDTELKQHLPVH), and 372–394 (YMCSLCFKSFPRMGSLIVHEKTH).

In terms of tissue distribution, specifically expressed in the hematopoietic lineage during embryogenesis; first expressed at the late blastula stage around the blastoderm margin. During gastrulation, restricted to the ventral mesoderm, the presumptive prechordal plate and the dorso-marginal cells of the organizer. At the 3-somite stage, strongly expressed in a caudal domain (marking the erythroid lineage) and a cephalic domain of the lateral mesoderm. At the 8- to 10-somite stage, caudal expression is in two bands of lateral mesoderm which later converge at the midline. Anterior expression is also in two bands of lateral mesoderm which converge as two patches at the midline by the 15-somite stage, with increased scattering of single cells (macrophage precursors) away from the midline to the yolksac. Once at the yolksac, expression is lost. By 20-24 hours post-fertilization (hpf), expressed in proerythroblasts in the erythroid blood island centered above the uro-genital opening. Expression persists in circulating erythroblasts but is lost in mature erythrocytes.

The polypeptide is Zinc finger protein draculin (Danio rerio (Zebrafish)).